The primary structure comprises 523 residues: Cytoplasmic dynein 1 light intermediate chain 1 (523 aa).

Residues 1–45 (MAAVGRVGSFGSSPPGLASTYASGPLANELASGSGGPAAGDDEDG) form a disordered region. 74–81 (GEDGAGKT) lines the ATP pocket. Position 207 is a phosphoserine (Ser-207). Thr-213 bears the Phosphothreonine mark. 2 disordered regions span residues 387-434 (PPTA…DPNM) and 457-523 (GSPG…GEAS). A phosphoserine mark is found at Ser-398 and Ser-405. Residue Thr-408 is modified to Phosphothreonine. Phosphoserine occurs at positions 412, 419, 421, and 427. A compositionally biased stretch (low complexity) spans 412-421 (SVSSNVASVS). Residues 458 to 473 (SPGGPGVGGSPGGGAA) show a composition bias toward gly residues. The span at 474 to 483 (GASTSLPPSA) shows a compositional bias: low complexity. Ser-486 and Ser-510 each carry phosphoserine. 2 positions are modified to phosphothreonine: Thr-512 and Thr-513. Residue Ser-516 is modified to Phosphoserine.

It belongs to the dynein light intermediate chain family. Homodimer. The cytoplasmic dynein 1 complex consists of two catalytic heavy chains (HCs) and a number of non-catalytic subunits presented by intermediate chains (ICs), light intermediate chains (LICs) and light chains (LCs); the composition seems to vary in respect to the IC, LIC and LC composition. The heavy chain homodimer serves as a scaffold for the probable homodimeric assembly of the respective non-catalytic subunits. The ICs and LICs bind directly to the HC dimer and the LCs assemble on the IC dimer. Self-associates. Interacts with DYNC1H1; DYNC1LI1 and DYNC1LI2 bind mutually exclusive to DYNC1H1. Interacts with PCNT. Forms a complex with RAB11FIP3 and RAB11A1; the interaction between DYNC1LI1 and RAB11FIP3 is direct and induces DYNC1LI1 localization onto endosomal membrane; the complex regulates endocytic trafficking. Interacts with RUFY3. Post-translationally, phosphorylated during mitosis but not in interphase.

Its subcellular location is the cytoplasm. It localises to the chromosome. It is found in the centromere. The protein resides in the kinetochore. The protein localises to the cytoskeleton. Its subcellular location is the spindle pole. It localises to the recycling endosome membrane. In terms of biological role, acts as one of several non-catalytic accessory components of the cytoplasmic dynein 1 complex that are thought to be involved in linking dynein to cargos and to adapter proteins that regulate dynein function. Cytoplasmic dynein 1 acts as a motor for the intracellular retrograde motility of vesicles and organelles along microtubules. May play a role in binding dynein to membranous organelles or chromosomes. Probably involved in the microtubule-dependent transport of pericentrin. Is required for progress through the spindle assembly checkpoint. The phosphorylated form appears to be involved in the selective removal of MAD1L1 and MAD1L2 but not BUB1B from kinetochores. Forms a functional Rab11/RAB11FIP3/dynein complex onto endosomal membrane that regulates the movement of peripheral sorting endosomes (SE) along microtubule tracks toward the microtubule organizing center/centrosome, generating the endosomal recycling compartment (ERC). This is Cytoplasmic dynein 1 light intermediate chain 1 (Dync1li1) from Rattus norvegicus (Rat).